Here is a 353-residue protein sequence, read N- to C-terminus: S-adenosylmethionine:tRNA ribosyltransferase-isomerase (353 aa).

This sequence belongs to the QueA family. Monomer.

The protein resides in the cytoplasm. The enzyme catalyses 7-aminomethyl-7-carbaguanosine(34) in tRNA + S-adenosyl-L-methionine = epoxyqueuosine(34) in tRNA + adenine + L-methionine + 2 H(+). It participates in tRNA modification; tRNA-queuosine biosynthesis. Functionally, transfers and isomerizes the ribose moiety from AdoMet to the 7-aminomethyl group of 7-deazaguanine (preQ1-tRNA) to give epoxyqueuosine (oQ-tRNA). The protein is S-adenosylmethionine:tRNA ribosyltransferase-isomerase of Rickettsia bellii (strain RML369-C).